The chain runs to 498 residues: Elastase (498 aa).

An N-terminal signal peptide occupies residues 1–23; that stretch reads MKKVSTLDLLFVAIMGVSPAAFA. Positions 24–197 are excised as a propeptide; that stretch reads ADLIDVSKLP…VLDQWEGLAH (174 aa). Cys227 and Cys255 are disulfide-bonded. Residue Thr236 is modified to Phosphothreonine. Residue Asp333 coordinates Ca(2+). Residue His337 participates in Zn(2+) binding. Residue Glu338 is part of the active site. Positions 341 and 361 each coordinate Zn(2+). 4 residues coordinate Ca(2+): Glu369, Glu372, Asp380, and Leu382. His420 serves as the catalytic Proton donor. Cys467 and Cys494 are oxidised to a cystine.

It belongs to the peptidase M4 family. It depends on Ca(2+) as a cofactor. Zn(2+) serves as cofactor. Post-translationally, made as a pre-pro-protein which is exported to the periplasm. Probably autocatalyzes cleavage of its pro-peptide. The pro-peptide can be secreted with mature elastase.

It is found in the secreted. It carries out the reaction Hydrolysis of proteins including elastin, collagen types III and IV, fibronectin and immunoglobulin A, generally with bulky hydrophobic group at P1'. Insulin B chain cleavage pattern identical to that of thermolysin, but specificity differs in other respects.. In terms of biological role, cleaves host elastase, collagen, IgI and several complement components as well as endogenous pro-aminopeptidase, pro-chitin-binding protein (cbpD). Cleaves its own pro-peptide. Involved in the pathogenesis of P.aeruginosa infections. This chain is Elastase (lasB), found in Pseudomonas aeruginosa (strain UCBPP-PA14).